Consider the following 265-residue polypeptide: 4-hydroxy-tetrahydrodipicolinate reductase (265 aa).

Residues 7 to 12 (GASGRM), Asp-33, 96 to 98 (GTT), and 120 to 123 (AANF) each bind NAD(+). Catalysis depends on His-153, which acts as the Proton donor/acceptor. His-154 contacts (S)-2,3,4,5-tetrahydrodipicolinate. Lys-157 functions as the Proton donor in the catalytic mechanism. 163–164 (GT) serves as a coordination point for (S)-2,3,4,5-tetrahydrodipicolinate.

The protein belongs to the DapB family.

Its subcellular location is the cytoplasm. The enzyme catalyses (S)-2,3,4,5-tetrahydrodipicolinate + NAD(+) + H2O = (2S,4S)-4-hydroxy-2,3,4,5-tetrahydrodipicolinate + NADH + H(+). The catalysed reaction is (S)-2,3,4,5-tetrahydrodipicolinate + NADP(+) + H2O = (2S,4S)-4-hydroxy-2,3,4,5-tetrahydrodipicolinate + NADPH + H(+). It participates in amino-acid biosynthesis; L-lysine biosynthesis via DAP pathway; (S)-tetrahydrodipicolinate from L-aspartate: step 4/4. Its function is as follows. Catalyzes the conversion of 4-hydroxy-tetrahydrodipicolinate (HTPA) to tetrahydrodipicolinate. The sequence is that of 4-hydroxy-tetrahydrodipicolinate reductase from Cupriavidus necator (strain ATCC 17699 / DSM 428 / KCTC 22496 / NCIMB 10442 / H16 / Stanier 337) (Ralstonia eutropha).